Here is an 845-residue protein sequence, read N- to C-terminus: Alanine--tRNA ligase (845 aa).

Zn(2+) is bound by residues His-552, His-556, Cys-653, and His-657.

This sequence belongs to the class-II aminoacyl-tRNA synthetase family. Zn(2+) is required as a cofactor.

The protein resides in the cytoplasm. The catalysed reaction is tRNA(Ala) + L-alanine + ATP = L-alanyl-tRNA(Ala) + AMP + diphosphate. Catalyzes the attachment of alanine to tRNA(Ala) in a two-step reaction: alanine is first activated by ATP to form Ala-AMP and then transferred to the acceptor end of tRNA(Ala). Also edits incorrectly charged Ser-tRNA(Ala) and Gly-tRNA(Ala) via its editing domain. The polypeptide is Alanine--tRNA ligase (Campylobacter hominis (strain ATCC BAA-381 / DSM 21671 / CCUG 45161 / LMG 19568 / NCTC 13146 / CH001A)).